A 191-amino-acid chain; its full sequence is UMP-CMP kinase 2 (191 aa).

12–17 (GSGKGT) contacts ATP. The interval 32–62 (SAGDLLRAERQREGSEFGALIESHIKNGSIV) is NMP. A ribonucleoside 5'-phosphate is bound by residues R38, 60-62 (SIV), and 88-91 (GFPR). N95 serves as a coordination point for CMP. The segment at 128 to 136 (NRGQGRTDD) is LID. R129 is a binding site for ATP. 2 residues coordinate a ribonucleoside 5'-phosphate: R133 and R144. ATP is bound at residue R172.

This sequence belongs to the adenylate kinase family. UMP-CMP kinase subfamily. In terms of assembly, monomer. It depends on Mg(2+) as a cofactor. In terms of tissue distribution, expressed in neurons and the pharynx.

The protein localises to the cytoplasm. The protein resides in the nucleus. The enzyme catalyses CMP + ATP = CDP + ADP. It carries out the reaction dCMP + ATP = dCDP + ADP. The catalysed reaction is UMP + ATP = UDP + ADP. Its function is as follows. Catalyzes the phosphorylation of pyrimidine nucleoside monophosphates at the expense of ATP. Plays an important role in de novo pyrimidine nucleotide biosynthesis. Has preference for UMP and CMP as phosphate acceptors. This Caenorhabditis elegans protein is UMP-CMP kinase 2.